A 722-amino-acid chain; its full sequence is Polyribonucleotide nucleotidyltransferase (722 aa).

Mg(2+) is bound by residues Asp-487 and Asp-493. Positions 554–613 (PRIETFKIPTDKIREVIGTGGKVIREIVEKTGAKVNIEDDGTVKVASSDGESIKAAIKWI) constitute a KH domain. Residues 623–691 (GEIYEGTVVK…DRGKTRLSMK (69 aa)) form the S1 motif domain. The segment at 697 to 722 (TGEDLEAKQKAEAKAEGEAPAQAAGE) is disordered. Residues 701–713 (LEAKQKAEAKAEG) are compositionally biased toward basic and acidic residues.

It belongs to the polyribonucleotide nucleotidyltransferase family. Mg(2+) serves as cofactor.

Its subcellular location is the cytoplasm. It carries out the reaction RNA(n+1) + phosphate = RNA(n) + a ribonucleoside 5'-diphosphate. Functionally, involved in mRNA degradation. Catalyzes the phosphorolysis of single-stranded polyribonucleotides processively in the 3'- to 5'-direction. This Rhodopseudomonas palustris (strain TIE-1) protein is Polyribonucleotide nucleotidyltransferase.